Reading from the N-terminus, the 945-residue chain is Netrin receptor UNC5B (945 aa).

An N-terminal signal peptide occupies residues 1 to 26 (MRARSGVRSALLLALLLCWDPTPSLA). Topologically, residues 27-377 (GVDSAGQVLP…LETSGDVALY (351 aa)) are extracellular. In terms of domain architecture, Ig-like spans 48–145 (PYFLLEPQDA…SGTTKSRRAY (98 aa)). 9 cysteine pairs are disulfide-bonded: Cys69–Cys130, Cys81–Cys128, Cys174–Cys225, Cys258–Cys295, Cys262–Cys299, Cys273–Cys285, Cys314–Cys348, Cys318–Cys353, and Cys326–Cys338. Residues 153–242 (KNFDQEPLAK…KRRSTTATVI (90 aa)) enclose the Ig-like C2-type domain. Asn222 carries an N-linked (GlcNAc...) asparagine glycan. TSP type-1 domains are found at residues 246-300 (NGGW…TVCP) and 302-354 (DGAW…GLCV). Asn347 carries an N-linked (GlcNAc...) asparagine glycan. The chain crosses the membrane as a helical span at residues 378–398 (AGLVVAVFVVVAVLMAVGVIV). Residues 399–945 (YRRNCRDFDT…LVAMATDGDC (547 aa)) are Cytoplasmic-facing. Residue Cys403 is the site of S-palmitoyl cysteine attachment. In terms of domain architecture, ZU5 spans 543-686 (SSVSGTFGCL…LGTYVFMGES (144 aa)). Tyr581 carries the post-translational modification Phosphotyrosine. A UPA domain region spans residues 689–838 (RSAVKRLQLA…AETPAGSLDA (150 aa)). The interaction with DCC stretch occupies residues 707 to 725 (SLEYSLRVYCLEDTPVALK). Residues 865-943 (KICSSLDAPN…EMLVAMATDG (79 aa)) enclose the Death domain.

It belongs to the unc-5 family. Interacts with the cytoplasmic part of DCC. Interacts with GNAI2 via its cytoplasmic part. Interacts (via death domain) with DAPK1 (via death domain). Interacts (via extracellular domain) with FLRT2 and FLRT3 (via extracellular domain), but has higher affinity for FLRT3. Identified in a complex with FLRT3 and ADGRL3; does not interact with ADGRL3 by itself. Phosphorylated on cytoplasmic tyrosine residues. In terms of processing, palmitoylation is required for pro-apoptotic activity, but not for location at lipid rafts. Post-translationally, proteolytically cleaved by caspases during apoptosis. The cleavage does not take place when the receptor is associated with netrin ligand. Its cleavage by caspases is required to induce apoptosis. As to expression, highly expressed in brain. Expressed in lung during late development. Expressed during early blood vessel formation, in the semicircular canal and in a dorsal to ventral gradient in the retina.

It localises to the cell membrane. The protein localises to the membrane raft. Functionally, receptor for netrin required for axon guidance. Mediates axon repulsion of neuronal growth cones in the developing nervous system upon ligand binding. Axon repulsion in growth cones may be caused by its association with DCC that may trigger signaling for repulsion. Functions as a netrin receptor that negatively regulates vascular branching during angiogenesis. Mediates retraction of tip cell filopodia on endothelial growth cones in response to netrin. It also acts as a dependence receptor required for apoptosis induction when not associated with netrin ligand. Mediates apoptosis by activating DAPK1. In the absence of NTN1, activates DAPK1 by reducing its autoinhibitory phosphorylation at Ser-308 thereby increasing its catalytic activity. In Mus musculus (Mouse), this protein is Netrin receptor UNC5B (Unc5b).